The following is a 150-amino-acid chain: UPF0756 membrane protein Dd1591_2981 (150 aa).

4 consecutive transmembrane segments (helical) span residues 10-32, 51-71, 88-108, and 127-147; these read ILLALAALGIISQNMTVTLAILF, YGLSFGVLVLTIGVMAPIASG, LMAVAIGVAVSWLGGRGVVLM, and ALFRGVPVGPLIAAGLLSLLI.

This sequence belongs to the UPF0756 family.

It is found in the cell membrane. The protein is UPF0756 membrane protein Dd1591_2981 of Dickeya chrysanthemi (strain Ech1591) (Dickeya zeae (strain Ech1591)).